Consider the following 374-residue polypeptide: Glutamate 5-kinase (374 aa).

Residue Lys-9 coordinates ATP. Positions 49, 136, and 148 each coordinate substrate. ATP-binding positions include 168–169 and 210–216; these read TD and TGGMKSK. Positions 276–354 constitute a PUA domain; it reads SGVVRIDQGA…DEAKQLIPLV (79 aa).

The protein belongs to the glutamate 5-kinase family.

It is found in the cytoplasm. The catalysed reaction is L-glutamate + ATP = L-glutamyl 5-phosphate + ADP. It participates in amino-acid biosynthesis; L-proline biosynthesis; L-glutamate 5-semialdehyde from L-glutamate: step 1/2. Functionally, catalyzes the transfer of a phosphate group to glutamate to form L-glutamate 5-phosphate. The protein is Glutamate 5-kinase of Halalkalibacterium halodurans (strain ATCC BAA-125 / DSM 18197 / FERM 7344 / JCM 9153 / C-125) (Bacillus halodurans).